Here is a 440-residue protein sequence, read N- to C-terminus: Sialyltransferase-like protein 2 (440 aa).

The Cytoplasmic segment spans residues 1-5 (MKLLH). The helical; Signal-anchor for type II membrane protein transmembrane segment at 6–26 (LIFLLALTTGISAVLIYIIGV) threads the bilayer. Residues 27–440 (SNLYESNRFT…HGQLCITPAD (414 aa)) lie on the Lumenal side of the membrane. N-linked (GlcNAc...) asparagine glycans are attached at residues asparagine 113 and asparagine 149.

It belongs to the glycosyltransferase 29 family.

It localises to the golgi apparatus membrane. Functionally, may be involved in the transfer of 2-keto-3-deoxy-D-lyxo-heptulosaric acid (Dha) and/or 2-keto-3-deoxy-D-manno-octulosonic acid (Kdo) on the homogalacturonan backbone of rhamnogalacturonan-II. Required for efficient pollen grain germination and pollen tube elongation. Does not possess sialyltransferase activity in vitro. This Arabidopsis thaliana (Mouse-ear cress) protein is Sialyltransferase-like protein 2.